We begin with the raw amino-acid sequence, 333 residues long: 1D-myo-inositol 2-acetamido-2-deoxy-alpha-D-glucopyranoside deacetylase (333 aa).

The Zn(2+) site is built by H18, D21, and H165.

The protein belongs to the MshB deacetylase family. The cofactor is Zn(2+).

It catalyses the reaction 1D-myo-inositol 2-acetamido-2-deoxy-alpha-D-glucopyranoside + H2O = 1D-myo-inositol 2-amino-2-deoxy-alpha-D-glucopyranoside + acetate. Its function is as follows. Catalyzes the deacetylation of 1D-myo-inositol 2-acetamido-2-deoxy-alpha-D-glucopyranoside (GlcNAc-Ins) in the mycothiol biosynthesis pathway. The protein is 1D-myo-inositol 2-acetamido-2-deoxy-alpha-D-glucopyranoside deacetylase of Corynebacterium jeikeium (strain K411).